Here is a 379-residue protein sequence, read N- to C-terminus: Caffeyl-CoA reductase-Etf complex subunit CarC (379 aa).

FAD contacts are provided by residues 122–131 (FALTEPGAGS) and 155–157 (FIT). Ser-131 serves as a coordination point for substrate. A substrate-binding site is contributed by 239–242 (DVGR). FAD is bound by residues Arg-267, Gln-278, and 335 to 339 (QIHGG). Residue Glu-362 is the Proton acceptor of the active site. Gly-363 serves as a coordination point for substrate. 364-366 (TSQ) is a binding site for FAD.

This sequence belongs to the acyl-CoA dehydrogenase family. Part of the homotrimeric caffeyl-CoA reductase-Etf complex composed of (R)-2-hydroxyisocaproyl-CoA dehydratase CarC, and the electron transfer flavoprotein (ETF) alpha (CarE) and beta (CarD) subunits. The cofactor is FAD.

It is found in the cytoplasm. The enzyme catalyses hydrocaffeoyl-CoA + 2 reduced [2Fe-2S]-[ferredoxin] + 2 NAD(+) = (E)-caffeoyl-CoA + 2 oxidized [2Fe-2S]-[ferredoxin] + 2 NADH. In terms of biological role, the Caffeyl-CoA reductase-Etf complex catalyzes the reduction of caffeyl-CoA to yield hydrocaffeyl-CoA. It couples the endergonic ferredoxin reduction with NADH as reductant to the exergonic reduction of caffeoyl-CoA with the same reductant. It uses the mechanism of electron bifurcation to overcome the steep energy barrier in ferredoxin reduction. Also reduces 4-coumaroyl-CoA and feruloyl-CoA. This chain is Caffeyl-CoA reductase-Etf complex subunit CarC, found in Acetobacterium woodii (strain ATCC 29683 / DSM 1030 / JCM 2381 / KCTC 1655 / WB1).